A 173-amino-acid chain; its full sequence is MDIKEAGPFPVKKEQFRMTVNGQAWEVAAVPTTHLSDLLRKEFQLTGTKVSCGIGRCGACSILIDGKLANACMTMAYQADGHSITTIEGLQKEELDMCQTAFLEEGGFQCGYCTPGMIIALKALFRETPQPSDKDIEEGLAGNLCRCTGYGGIMRSACRIRRELNGGRRESGF.

In terms of domain architecture, 2Fe-2S ferredoxin-type spans 14-90 (EQFRMTVNGQ…GHSITTIEGL (77 aa)). 8 residues coordinate [2Fe-2S] cluster: Cys-52, Cys-57, Cys-60, Cys-72, Cys-110, Cys-113, Cys-145, and Cys-147.

As to quaternary structure, could be composed of four subunits: PucA, PucC, PucD and PucE. [2Fe-2S] cluster is required as a cofactor.

It catalyses the reaction xanthine + NAD(+) + H2O = urate + NADH + H(+). The catalysed reaction is hypoxanthine + NAD(+) + H2O = xanthine + NADH + H(+). The protein operates within purine metabolism; hypoxanthine degradation; urate from hypoxanthine: step 1/2. It participates in purine metabolism; hypoxanthine degradation; urate from hypoxanthine: step 2/2. In terms of biological role, oxidizes hypoxanthine and xanthine to uric acid. This chain is Probable xanthine dehydrogenase subunit E (pucE), found in Bacillus subtilis (strain 168).